The primary structure comprises 685 residues: MWLKLFFLLLYFLVLFVLARFFEAIVWYETGIFATQLVDPVALSFKKLKTILECRGLGYSGLPEKKDVRELVEKSGDLMEGELYSALKEEEASESVSSTNFSGEMHFYELVEDTKDGIWLVQVIANDRSPLVGKIHWEKMVKKVSRFGIRTGTFNCSSDPRYCRRRGWVRSTLIMSVPQTSTSKGKVMLKEYSGRKIEVEHIFKWITAHAASRIKTIYNAEHLKEEWNKSDQYWLKIYLFANLDQPPAFFSALSIKFTGRVEFIFVNVENWDNKSYMTDIGIYNMPSYILRTPEGIYRYGNHTGEFISLQAMDSFLRSLQPEVNDLFVLSLVLVNLMAWMDLFITQGATIKRFVVLISTLGTYNSLLIISWLPVLGFLQLPYLDSFYEYSLKLLRYSNTTTLASWVRADWMFYSSHPALFLSTYLGHGLLIDYFEKKRRRNNNNDEVNANNLEWLSSLWDWYTSYLFHPIASFQNFPVESDWDEDPDLFLERLAFPDLWLHPLIPTDYIKNLPMWRFKCLGVQSEEEMSEGSQDTENDSESENTDTLSSEKEVFEDKQSVLHNSPGTASHCDAEACSCANKYCQTSPCERKGRSYGSYNTNEDMEPDWLTWPADMLHCTECVVCLENFENGCLLMGLPCGHVFHQNCIVMWLAGGRHCCPVCRWPSYKKKQPYAQHQPLSNDVPS.

4 consecutive transmembrane segments (helical) span residues 6 to 26 (FFLLLYFLVLFVLARFFEAIV), 326 to 346 (LFVLSLVLVNLMAWMDLFITQ), 366 to 386 (LLIISWLPVLGFLQLPYLDSF), and 411 to 431 (MFYSSHPALFLSTYLGHGLLI). Residues 526-543 (EEMSEGSQDTENDSESEN) show a composition bias toward acidic residues. Residues 526 to 550 (EEMSEGSQDTENDSESENTDTLSSE) form a disordered region. Residues 621–663 (CVVCLENFENGCLLMGLPCGHVFHQNCIVMWLAGGRHCCPVCR) form an RING-type zinc finger.

In terms of assembly, interacts with DERL1 and VCP. Highly expressed in the normal cerebellum but not in the cerebral cortex.

It localises to the endoplasmic reticulum membrane. The enzyme catalyses S-ubiquitinyl-[E2 ubiquitin-conjugating enzyme]-L-cysteine + [acceptor protein]-L-lysine = [E2 ubiquitin-conjugating enzyme]-L-cysteine + N(6)-ubiquitinyl-[acceptor protein]-L-lysine.. Its pathway is protein modification; protein ubiquitination. Acts as an E2-dependent E3 ubiquitin-protein ligase, probably involved in the ER-associated protein degradation pathway. In Homo sapiens (Human), this protein is E3 ubiquitin-protein ligase RNF103 (RNF103).